A 1473-amino-acid polypeptide reads, in one-letter code: G8 domain-containing protein DDB_G0286311 (1473 aa).

The signal sequence occupies residues 1–21 (MKRFFIVILFILLVCIFNVKS). A helical membrane pass occupies residues 105-125 (IVLMIATITGSLLFIRFNIGF). Asn-126 carries N-linked (GlcNAc...) asparagine glycosylation. The chain crosses the membrane as a helical span at residues 130–150 (TLIILIIGTIFLIGSSHSITL). N-linked (GlcNAc...) asparagine glycans are attached at residues Asn-203, Asn-241, and Asn-275. Low complexity predominate over residues 298-375 (TGTTPTTTPT…PTTTPTTTPT (78 aa)). Residues 298–400 (TGTTPTTTPT…SSSPSSPSFS (103 aa)) form a disordered region. Residues 376–389 (DSCPTTSTWRPTMA) show a composition bias toward polar residues. The span at 390-400 (SSSSPSSPSFS) shows a compositional bias: low complexity. N-linked (GlcNAc...) asparagine glycans are attached at residues Asn-444, Asn-637, Asn-680, Asn-1078, Asn-1088, Asn-1176, Asn-1206, Asn-1225, Asn-1389, and Asn-1424. Residues 626–754 (SIWSSGIVPL…YHNTWSKLST (129 aa)) enclose the G8 domain.

This sequence belongs to the comF family.

It is found in the membrane. The sequence is that of G8 domain-containing protein DDB_G0286311 from Dictyostelium discoideum (Social amoeba).